The primary structure comprises 190 residues: MSDVAVAETPAVKTPTKAPKANATKVPKVKTAAAHPPFINMVTAAISSLKERKGSSKIAILKYITANYKLGDQVKKINSNLRSALKKGVASKALVQTVGTGATGRFRVAEKTAATAKKPTVKKAATGEKVKKTVVKKTVAKKTGDKVKKAKSPKKIAKPAAKKATKSPSKKVAPKKAAAKPAKKTAALKA.

A disordered region spans residues 1-29 (MSDVAVAETPAVKTPTKAPKANATKVPKV). Ser-2 is modified (N-acetylserine). A compositionally biased stretch (low complexity) spans 9-29 (TPAVKTPTKAPKANATKVPKV). In terms of domain architecture, H15 spans 34-110 (AHPPFINMVT…GATGRFRVAE (77 aa)). The tract at residues 141 to 190 (KKTGDKVKKAKSPKKIAKPAAKKATKSPSKKVAPKKAAAKPAKKTAALKA) is disordered. Over residues 148–183 (KKAKSPKKIAKPAAKKATKSPSKKVAPKKAAAKPAK) the composition is skewed to basic residues.

This sequence belongs to the histone H1/H5 family.

Its subcellular location is the nucleus. It localises to the chromosome. In terms of biological role, histones H1 are necessary for the condensation of nucleosome chains into higher-order structures. The polypeptide is Putative histone H1.6 (hil-6) (Caenorhabditis elegans).